The following is a 199-amino-acid chain: uncharacterized protein (199 aa).

A Nudix hydrolase domain is found at 38–169 (NRRAAVLIPI…SLDIHREGIN (132 aa)). A Nudix box motif is present at residues 76–98 (GKADPDDQSLISTALREAEEEVA). Glutamate 92 and glutamate 96 together coordinate Mg(2+).

Belongs to the Nudix hydrolase family. PCD1 subfamily. It depends on Mn(2+) as a cofactor. Mg(2+) is required as a cofactor.

Functionally, probably mediates the hydrolysis of some nucleoside diphosphate derivatives. This is an uncharacterized protein from Yersinia pseudotuberculosis serotype I (strain IP32953).